Reading from the N-terminus, the 551-residue chain is Glucans biosynthesis protein D (551 aa).

The segment at residues 1-32 (MDRRRFIKGSMAMAAVCGTSGIASLFSQAAFA) is a signal peptide (tat-type signal).

It belongs to the OpgD/OpgG family. Predicted to be exported by the Tat system. The position of the signal peptide cleavage has not been experimentally proven.

Its subcellular location is the periplasm. Its pathway is glycan metabolism; osmoregulated periplasmic glucan (OPG) biosynthesis. Functionally, probably involved in the control of the structural glucose backbone of osmoregulated periplasmic glucans (OPGs). This Escherichia coli O139:H28 (strain E24377A / ETEC) protein is Glucans biosynthesis protein D.